Consider the following 296-residue polypeptide: MEYKDIATPSRTRALLDQYGFNFKKSLGQNFLIDVNIINKIIEASHIDCTTGVIEVGPGMGSLTEQLAKNAKKVMAFEIDQRLIPVLKDTLSPYDNVTIINEDILKADIAKAVDTHLQDCDKIMVVANLPYYITTPILLNLMQQDVPIDGFVVMMQKEVGERLNAQVGTKAYGSLSIVAQYYTETSKVLTVPKTVFMPPPNVDSIVVKLMQRQEPLVQVDDEEGFFKLAKAAFAQRRKTINNNYQNFFKDGKKNKETIRQWLESAGIDPKRRGETLTIQDFATLYEQKKKFSELTN.

Residues asparagine 30, leucine 32, glycine 57, glutamate 78, aspartate 103, and asparagine 128 each coordinate S-adenosyl-L-methionine.

Belongs to the class I-like SAM-binding methyltransferase superfamily. rRNA adenine N(6)-methyltransferase family. RsmA subfamily.

Its subcellular location is the cytoplasm. It catalyses the reaction adenosine(1518)/adenosine(1519) in 16S rRNA + 4 S-adenosyl-L-methionine = N(6)-dimethyladenosine(1518)/N(6)-dimethyladenosine(1519) in 16S rRNA + 4 S-adenosyl-L-homocysteine + 4 H(+). Specifically dimethylates two adjacent adenosines (A1518 and A1519) in the loop of a conserved hairpin near the 3'-end of 16S rRNA in the 30S particle. May play a critical role in biogenesis of 30S subunits. The chain is Ribosomal RNA small subunit methyltransferase A from Staphylococcus epidermidis (strain ATCC 35984 / DSM 28319 / BCRC 17069 / CCUG 31568 / BM 3577 / RP62A).